Consider the following 330-residue polypeptide: ADP-L-glycero-D-manno-heptose-6-epimerase (330 aa).

Residues phenylalanine 11–isoleucine 12, aspartate 32–asparagine 33, lysine 39, lysine 54, glutamate 75–serine 79, and asparagine 92 contribute to the NADP(+) site. Tyrosine 139 acts as the Proton acceptor in catalysis. Lysine 143 contacts NADP(+). Position 168 (asparagine 168) interacts with substrate. NADP(+)-binding residues include valine 169 and lysine 177. The active-site Proton acceptor is lysine 177. Substrate is bound by residues arginine 179, histidine 186, phenylalanine 200 to tyrosine 203, arginine 213, and tyrosine 292.

The protein belongs to the NAD(P)-dependent epimerase/dehydratase family. HldD subfamily. As to quaternary structure, homopentamer. NADP(+) is required as a cofactor.

The enzyme catalyses ADP-D-glycero-beta-D-manno-heptose = ADP-L-glycero-beta-D-manno-heptose. It functions in the pathway nucleotide-sugar biosynthesis; ADP-L-glycero-beta-D-manno-heptose biosynthesis; ADP-L-glycero-beta-D-manno-heptose from D-glycero-beta-D-manno-heptose 7-phosphate: step 4/4. Catalyzes the interconversion between ADP-D-glycero-beta-D-manno-heptose and ADP-L-glycero-beta-D-manno-heptose via an epimerization at carbon 6 of the heptose. This chain is ADP-L-glycero-D-manno-heptose-6-epimerase, found in Burkholderia mallei (strain NCTC 10247).